A 202-amino-acid chain; its full sequence is Putative NADH dehydrogenase/NAD(P)H nitroreductase SCO7141 (202 aa).

Belongs to the nitroreductase family. HadB/RutE subfamily. FMN serves as cofactor.

The sequence is that of Putative NADH dehydrogenase/NAD(P)H nitroreductase SCO7141 from Streptomyces coelicolor (strain ATCC BAA-471 / A3(2) / M145).